We begin with the raw amino-acid sequence, 328 residues long: MSQQTTIRDTGEAAATNAPANSATSTSTPDNQPTPLDAFEVLLITGMSGAGRSHAADCVEDMGWYVVDNLPPKLLIPLVDMMTTSGSGSGSGVHKLAAVIDVRSSYFDELAAVLGHLDDLGVKTHILFLDASNEVLIKRYESVRRPHPLQHGNRLIDGILEERHLLEDLKERADWVIDTSSLSIHQLSTKLYETMLGSGPTTVAVHIFSFGFKYGMPIDADFVADVRFLPNPFWVPNLRELTGHDKPVADYVLSSKGAKEFLDAYEKAIEIALEGYAQEDKHYVTIAVGCTGGQHRSVAMSEELARRLRAHGLNVTVSAREQHKRHSS.

Residues 1 to 33 (MSQQTTIRDTGEAAATNAPANSATSTSTPDNQP) form a disordered region. Positions 13 to 29 (AAATNAPANSATSTSTP) are enriched in low complexity. Residue 46-53 (GMSGAGRS) coordinates ATP. 101 to 104 (DVRS) serves as a coordination point for GTP.

It belongs to the RapZ-like family.

Its function is as follows. Displays ATPase and GTPase activities. This Bifidobacterium longum subsp. infantis (strain ATCC 15697 / DSM 20088 / JCM 1222 / NCTC 11817 / S12) protein is Nucleotide-binding protein Blon_1085/BLIJ_1109.